A 293-amino-acid polypeptide reads, in one-letter code: 5'-3' exoribonuclease Rnm (293 aa).

The Mn(2+) site is built by H17, H19, D24, H49, E76, H87, H202, D259, and H261.

Belongs to the PHP family. TrpH/YciV subfamily. Mn(2+) serves as cofactor.

It catalyses the reaction a ribonucleoside 3',5'-bisphosphate + H2O = a ribonucleoside 5'-phosphate + phosphate. Functionally, exoribonuclease that catalyzes the last steps of 5S, 16S and 23S rRNA 5'-end maturation. Removes 3 nucleotides (nt) from the 5' end of 5S, 16S and 23S rRNA precursors to generate the mature 5' ends. 5S and 23S rRNA maturation occurs more efficiently and accurately on ribosomal particles as compared to free RNA. Efficiently catalyzes the hydrolysis of the 3'-phosphate from 3',5'-bis-phosphonucleotides as well as the successive hydrolysis of 5'-phosphomononucleotides from the 5'-end of short pieces of RNA and DNA, with no specificity toward the identity of the nucleotide base. Is more efficient at hydrolyzing RNA oligonucleotides than DNA oligonucleotides. This enzyme can also hydrolyze annealed DNA duplexes, albeit at a catalytic efficiency lower than that of the corresponding single-stranded oligonucleotides. The chain is 5'-3' exoribonuclease Rnm from Salmonella typhimurium (strain LT2 / SGSC1412 / ATCC 700720).